The chain runs to 664 residues: 26S rRNA (cytosine-C(5))-methyltransferase nsun-1 (664 aa).

A disordered region spans residues 1–105; sequence MAIVKKKKVS…DDSDAGDHLP (105 aa). The segment covering 38–52 has biased composition (basic residues); sequence PKKKKLVKKVKKSAK. A compositionally biased stretch (basic and acidic residues) spans 53 to 68; sequence KAHEEEPIEQVEKLQL. A compositionally biased stretch (acidic residues) spans 84–99; sequence SDDEDLRDDYSDDDSD. Residues 313–319, Asp337, and Asp382 each bind S-adenosyl-L-methionine; that span reads CSAPGGK. Cys439 (nucleophile) is an active-site residue. The interval 513–664 is disordered; sequence KMSKQGVMEK…RRKKMLAKQQ (152 aa). The segment covering 519–528 has biased composition (basic and acidic residues); it reads VMEKEKEKAA. Residues 541–550 show a composition bias toward acidic residues; it reads EASESSDDEE. Positions 563–572 are enriched in basic residues; that stretch reads KPAKKQQQKK. Residues 606-618 are compositionally biased toward basic and acidic residues; that stretch reads KAAEKQAAVKEDD. 2 stretches are compositionally biased toward basic residues: residues 627–644 and 652–664; these read KRAK…KRAA and VKNR…AKQQ.

The protein belongs to the class I-like SAM-binding methyltransferase superfamily. RsmB/NOP family.

It localises to the nucleus. It is found in the nucleolus. It carries out the reaction a cytidine in 26S rRNA + S-adenosyl-L-methionine = a 5-methylcytidine in 26S rRNA + S-adenosyl-L-homocysteine + H(+). Methyltransferase which methylates the carbon-5 position of cytosine 2982 to 5-methylcytosine (m5C2982) in 26S rRNA. May play a role in the translation of leucine and proline codons. May be required for the translation of specific mRNAs such as mRNAs involved in gonad development, collagen production and cuticle integrity. Plays a role in ensuring the correct localization of the germline-specific protein gld-1 during development. Not required for pre-rRNA processing, the production of mature 5S, 5.8S, 18S or 26S rRNAs or global translation. Plays a role in positively regulating fertility. The polypeptide is 26S rRNA (cytosine-C(5))-methyltransferase nsun-1 (Caenorhabditis elegans).